We begin with the raw amino-acid sequence, 513 residues long: ATP synthase subunit alpha (513 aa).

169 to 176 (GDRQTGKS) lines the ATP pocket.

The protein belongs to the ATPase alpha/beta chains family. F-type ATPases have 2 components, CF(1) - the catalytic core - and CF(0) - the membrane proton channel. CF(1) has five subunits: alpha(3), beta(3), gamma(1), delta(1), epsilon(1). CF(0) has three main subunits: a(1), b(2) and c(9-12). The alpha and beta chains form an alternating ring which encloses part of the gamma chain. CF(1) is attached to CF(0) by a central stalk formed by the gamma and epsilon chains, while a peripheral stalk is formed by the delta and b chains.

It is found in the cell membrane. It carries out the reaction ATP + H2O + 4 H(+)(in) = ADP + phosphate + 5 H(+)(out). Functionally, produces ATP from ADP in the presence of a proton gradient across the membrane. The alpha chain is a regulatory subunit. In Baumannia cicadellinicola subsp. Homalodisca coagulata, this protein is ATP synthase subunit alpha.